Here is a 624-residue protein sequence, read N- to C-terminus: Na(+)/H(+) antiporter NhaA (624 aa).

The interval 1-164 is unknown; it reads MNPELPPNHL…TFFINGRRYD (164 aa). The segment at 165–624 is na(+)/H(+) antiporter NhaA; that stretch reads GPWDVRSLSE…NAQAEEEKNP (460 aa). A run of 11 helical transmembrane segments spans residues 199–219, 240–260, 279–299, 319–339, 348–368, 371–391, 407–427, 497–517, 521–541, 565–585, and 596–616; these read GIMLLLATALAVVLSNSALGP, LSLRHWINDGLLVIFFLVVGL, LPIAAAIGGMAVPALLYLILV, GWGVPMATDTAFAIALIAMMG, VFLTAAAIVDDIGAIIVVAIF, GELHIAYLGSAVAIAGLLALL, IVLWVFVYASGIHATLAGIIL, FLVLPVFALANAGVVVETSVF, IPLMLGTATALVIGKPLGFIT, GAGALAGIGFTMSLFIASQAF, and IAIFGGSILSAIIGVAILWNA.

Belongs to the NhaA Na(+)/H(+) (TC 2.A.33) antiporter family.

The protein localises to the cell inner membrane. The enzyme catalyses Na(+)(in) + 2 H(+)(out) = Na(+)(out) + 2 H(+)(in). Na(+)/H(+) antiporter that extrudes sodium in exchange for external protons. This Nitrosospira multiformis (strain ATCC 25196 / NCIMB 11849 / C 71) protein is Na(+)/H(+) antiporter NhaA.